Consider the following 512-residue polypeptide: Acid-sensing ion channel 2 (512 aa).

Over 1-37 (MDLKESPSEGSLQPSSIQIFANTSTLHGIRHIFVYGP) the chain is Cytoplasmic. Phosphoserine occurs at positions 8 and 11. A helical transmembrane segment spans residues 38–58 (LTIRRVLWAVAFVGSLGLLLV). At 59 to 427 (ESSERVSYYF…EQKKAYEVAA (369 aa)) the chain is on the extracellular side. 6 disulfides stabilise this stretch: cysteine 92–cysteine 193, cysteine 289–cysteine 364, cysteine 307–cysteine 360, cysteine 311–cysteine 358, cysteine 320–cysteine 342, and cysteine 322–cysteine 334. 2 N-linked (GlcNAc...) asparagine glycosylation sites follow: asparagine 365 and asparagine 392. The helical transmembrane segment at 428-448 (LLGDIGGQMGLFIGASLLTIL) threads the bilayer. The short motif at 441 to 443 (GAS) is the GAS motif; ion selectivity filter element. Residues 449 to 512 (ELFDYIYELI…ALGTLEEIAC (64 aa)) lie on the Cytoplasmic side of the membrane.

This sequence belongs to the amiloride-sensitive sodium channel (TC 1.A.6) family. ASIC2 subfamily. Can form homotrimers. Heterotrimer; forms functional heterotrimers producing channel with different properties. Forms heterotrimers with ASIC1; while ASIC1 determines current amplitude, ASIC2 influences the properties of the current. Forms heterotrimers with ASIC3; resulting in channels with distinct properties. Interacts with STOM; STOM regulates the gating of ASIC2-containing channels. Interacts with PICK1; promotes ASIC3 phosphorylation by PKC and activation of ASIC2/ASIC3 heterotrimers. Expressed in sciatic nerve and dorsal root ganglion (DRG) (at protein level). Both isoforms display the same expression pattern except in DRG where isoform 2 is more abundantly expressed. Widely distributed throughout the brain. Highly expressed in the main olfactory bulb, neo- and allo-cortical regions, hippocampal formation, habenula, basolateral amygdaloid nuclei, and cerebellum. In the olfactory system, expressed in the glomerular cell layer, the internal granular layer, and the mitral and internal plexiform cell layers. Within the glomerular layer, restricted to the periglomerular cells. In the neocortex, strongly expressed in the large pyramidal neurons in all cortical layers as well as in the oligo-, astro-, or micro-glia cells. In the hippocampal formation, expressed in dentate granule cells and hilar neurons, as well as in pyramidal cells of CA1-CA3 subfields. Expressed in stratum oriens and radiatum of all subfields. Within the thalamus, expressed moderately in the medial and lateral habenula. In the cerebellar cortex expressed in Purkinje cells and granule cells. Expressed at low levels in choroid plexus.

Its subcellular location is the cell membrane. The catalysed reaction is Na(+)(in) = Na(+)(out). It carries out the reaction K(+)(in) = K(+)(out). The enzyme catalyses Li(+)(in) = Li(+)(out). Its activity is regulated as follows. Inhibited by the diuretic drug amiloride. Inhibited by gadolinium ions, the heterotrimer with ASIC3 being more sensitive. Zn(2+) potentiates the acid activation of ASIC2-containing homomeric and heteromeric channels. The snake venom mambalgin-1 and mambalgin-2 inhibit the homotrimers composed of ASIC1 and ASIC2 and have strong analgesic effects. In terms of biological role, forms pH-gated trimeric sodium channels that act as postsynaptic excitatory sensors in the nervous system. Upon extracellular acidification, these channels generate rapid, transient inward currents that fully desensitize. Highly selective for sodium, they are permeable to other cations. By forming heterotrimeric channels with ASIC1, could contribute to synaptic plasticity, learning, and memory. Additionally, as acid sensors at nerve terminals, plays a role in mechanosensation and phototransduction. Its function is as follows. Has no pH-gated sodium channel activity per se but can associate with other ASICs to produce functional channels with specific properties. The sequence is that of Acid-sensing ion channel 2 from Rattus norvegicus (Rat).